A 134-amino-acid chain; its full sequence is D-ribose pyranase (134 aa).

Residue His-20 is the Proton donor of the active site. Substrate-binding positions include Asp-28, His-101, and 123-125; that span reads YSN.

It belongs to the RbsD / FucU family. RbsD subfamily. Homodecamer.

It localises to the cytoplasm. The catalysed reaction is beta-D-ribopyranose = beta-D-ribofuranose. Its pathway is carbohydrate metabolism; D-ribose degradation; D-ribose 5-phosphate from beta-D-ribopyranose: step 1/2. Catalyzes the interconversion of beta-pyran and beta-furan forms of D-ribose. The sequence is that of D-ribose pyranase from Pseudomonas syringae pv. tomato (strain ATCC BAA-871 / DC3000).